Consider the following 329-residue polypeptide: Malate dehydrogenase (329 aa).

An NAD(+)-binding site is contributed by 12–18; it reads GAAGQIG. The substrate site is built by Arg93 and Arg99. NAD(+)-binding positions include Asn106, Gln113, and 130–132; that span reads TGN. Substrate is bound by residues Asn132 and Arg163. The active-site Proton acceptor is the His188.

This sequence belongs to the LDH/MDH superfamily. MDH type 2 family.

It catalyses the reaction (S)-malate + NAD(+) = oxaloacetate + NADH + H(+). Catalyzes the reversible oxidation of malate to oxaloacetate. The sequence is that of Malate dehydrogenase from Mycobacterium leprae (strain TN).